The following is an 831-amino-acid chain: Cadherin-related family member 5 (831 aa).

An N-terminal signal peptide occupies residues 1 to 28 (MGAPALLWPSLLLPWLTVLFGQPPGTLA). Residues 29-641 (QTQVCSVNQT…GQRFSTVDMA (613 aa)) are Extracellular-facing. N-linked (GlcNAc...) asparagine glycosylation is found at Asn36, Asn45, Asn84, Asn135, Asn143, Asn173, Asn201, Asn287, Asn311, Asn408, and Asn475. Cadherin domains lie at 53-125 (VNIF…DNAP), 128-240 (SFEI…TPWF), 252-357 (IHAQ…PLQF), and 358-459 (SQSL…ERER). The tract at residues 452–632 (IQVSERERTP…STGAGEQGDG (181 aa)) is disordered. Polar residues predominate over residues 473-491 (SSNTTMEAPLTSGTSQRPA). Residues 505–540 (GGTTLRPPTPASSIPGGSPTLGTSTSPQTTTPGGDS) show a composition bias toward low complexity. The span at 541-554 (AQTPKPGTSHPTAP) shows a compositional bias: polar residues. 2 repeat units span residues 541–571 (AQTPKPGTSHPTAPTSRTSTSLMTTSSRSDS) and 572–602 (TQTPKPGTSQPMVPIPGASTSSQPATPSGSS). A 3 X 31 AA approximate tandem repeats region spans residues 541–614 (AQTPKPGTSH…TPKPGTSQST (74 aa)). The span at 555 to 572 (TSRTSTSLMTTSSRSDST) shows a compositional bias: low complexity. Composition is skewed to polar residues over residues 573 to 582 (QTPKPGTSQP) and 589 to 623 (ASTSSQPATPSGSSPQTPKPGTSQSTATGPISLPS). Residues 605-614 (TPKPGTSQST) form a 3; truncated repeat. Residues 642–662 (VLGGVLGALLLLALICLVILV) form a helical membrane-spanning segment. The Cytoplasmic segment spans residues 663–831 (HKHYRHRLAC…FGVDADNTYI (169 aa)). The interval 663–831 (HKHYRHRLAC…FGVDADNTYI (169 aa)) is mediates interaction with USH1C and MYO7B and is required for proper localization to microvilli tips and function in microvilli organization. 2 disordered regions span residues 675-774 (GKAS…GGYK) and 793-831 (EPTADVDSASASGSEGSDDDDPDQKKTLRFGVDADNTYI). 3 positions are modified to phosphoserine: Ser699, Ser721, and Ser725. A compositionally biased stretch (pro residues) spans 716-738 (PLRPPSPMSSSPTPPSSTPPSPQ). Thr728 is modified (phosphothreonine). Phosphoserine occurs at positions 736 and 753. Positions 761-771 (LTKERRPEGEG) are enriched in basic and acidic residues. Thr795 bears the Phosphothreonine mark. The segment covering 797-807 (DVDSASASGSE) has biased composition (low complexity). Phosphoserine is present on residues Ser802, Ser804, and Ser806.

As to quaternary structure, part of the IMAC/intermicrovillar adhesion complex/intermicrovillar tip-link complex composed of ANKS4B, MYO7B, USH1C, CDHR2 and CDHR5. Interacts (via cytoplasmic domain) with USH1C and MYO7B; required for proper localization of CDHR5 to microvilli tips and its function in brush border differentiation. Post-translationally, N- and O-glycosylated.

Its subcellular location is the apical cell membrane. It is found in the cell projection. The protein resides in the microvillus membrane. Functionally, intermicrovillar adhesion molecule that forms, via its extracellular domain, calcium-dependent heterophilic complexes with CDHR2 on adjacent microvilli. Thereby, controls the packing of microvilli at the apical membrane of epithelial cells. Through its cytoplasmic domain, interacts with microvillus cytoplasmic proteins to form the intermicrovillar adhesion complex/IMAC. This complex plays a central role in microvilli and epithelial brush border differentiation. The polypeptide is Cadherin-related family member 5 (Mus musculus (Mouse)).